The following is a 565-amino-acid chain: Oxygen-dependent choline dehydrogenase (565 aa).

Residue 6-35 (DYIIVGAGSAGNTLATRLTEDAGVTVLLLE) coordinates FAD. The Proton acceptor role is filled by H475.

Belongs to the GMC oxidoreductase family. The cofactor is FAD.

It catalyses the reaction choline + A = betaine aldehyde + AH2. The catalysed reaction is betaine aldehyde + NAD(+) + H2O = glycine betaine + NADH + 2 H(+). It participates in amine and polyamine biosynthesis; betaine biosynthesis via choline pathway; betaine aldehyde from choline (cytochrome c reductase route): step 1/1. Involved in the biosynthesis of the osmoprotectant glycine betaine. Catalyzes the oxidation of choline to betaine aldehyde and betaine aldehyde to glycine betaine at the same rate. This is Oxygen-dependent choline dehydrogenase from Pseudomonas putida (strain GB-1).